The following is a 227-amino-acid chain: Uracil-DNA glycosylase (227 aa).

Catalysis depends on D68, which acts as the Proton acceptor.

This sequence belongs to the uracil-DNA glycosylase (UDG) superfamily. UNG family.

It is found in the cytoplasm. It carries out the reaction Hydrolyzes single-stranded DNA or mismatched double-stranded DNA and polynucleotides, releasing free uracil.. Its function is as follows. Excises uracil residues from the DNA which can arise as a result of misincorporation of dUMP residues by DNA polymerase or due to deamination of cytosine. The chain is Uracil-DNA glycosylase from Mycolicibacterium smegmatis (strain ATCC 700084 / mc(2)155) (Mycobacterium smegmatis).